Here is a 518-residue protein sequence, read N- to C-terminus: Bifunctional methyltransferase (518 aa).

Residues 1–300 are hemK; the sequence is MQYSIKQILS…SHNRVIEISP (300 aa). Residues 1–302 are RF MTase; that stretch reads MQYSIKQILS…NRVIEISPIN (302 aa). S-adenosyl-L-methionine-binding positions include 140 to 144, D163, W192, N207, E347, E372, N399, and D421; that span reads GTGSG. 207–210 serves as a coordination point for substrate; the sequence is NPPY. Positions 301 to 518 are tRNA (guanine-N(7)-)-methyltransferase; that stretch reads INLNRSYARR…MILQHALTDH (218 aa). Residues 305–518 form a tRNA MTase region; the sequence is RSYARRIGKS…MILQHALTDH (214 aa). D421 is a catalytic residue. 2 residues coordinate substrate: K425 and D457.

The protein in the C-terminal section; belongs to the class I-like SAM-binding methyltransferase superfamily. TrmB family. This sequence in the N-terminal section; belongs to the protein N5-glutamine methyltransferase family. PrmC subfamily.

It carries out the reaction L-glutaminyl-[peptide chain release factor] + S-adenosyl-L-methionine = N(5)-methyl-L-glutaminyl-[peptide chain release factor] + S-adenosyl-L-homocysteine + H(+). It catalyses the reaction guanosine(46) in tRNA + S-adenosyl-L-methionine = N(7)-methylguanosine(46) in tRNA + S-adenosyl-L-homocysteine. In terms of biological role, methylates the class 1 translation termination release factors RF1/PrfA and RF2/PrfB on the glutamine residue of the universally conserved GGQ motif. Functionally, catalyzes the formation of N(7)-methylguanine at position 46 (m7G46) in tRNA. This chain is Bifunctional methyltransferase (prmC/trmB), found in Rickettsia prowazekii (strain Madrid E).